Here is a 356-residue protein sequence, read N- to C-terminus: Histidinol-phosphate aminotransferase (356 aa).

An N6-(pyridoxal phosphate)lysine modification is found at Lys-214.

This sequence belongs to the class-II pyridoxal-phosphate-dependent aminotransferase family. Histidinol-phosphate aminotransferase subfamily. Homodimer. Requires pyridoxal 5'-phosphate as cofactor.

The enzyme catalyses L-histidinol phosphate + 2-oxoglutarate = 3-(imidazol-4-yl)-2-oxopropyl phosphate + L-glutamate. It functions in the pathway amino-acid biosynthesis; L-histidine biosynthesis; L-histidine from 5-phospho-alpha-D-ribose 1-diphosphate: step 7/9. This chain is Histidinol-phosphate aminotransferase, found in Escherichia coli O81 (strain ED1a).